The chain runs to 322 residues: Acetyl-coenzyme A carboxylase carboxyl transferase subunit alpha (322 aa).

The CoA carboxyltransferase C-terminal domain maps to 39–293 (RLASKSQQLT…KRALAESLRQ (255 aa)).

The protein belongs to the AccA family. As to quaternary structure, acetyl-CoA carboxylase is a heterohexamer composed of biotin carboxyl carrier protein (AccB), biotin carboxylase (AccC) and two subunits each of ACCase subunit alpha (AccA) and ACCase subunit beta (AccD).

The protein localises to the cytoplasm. It catalyses the reaction N(6)-carboxybiotinyl-L-lysyl-[protein] + acetyl-CoA = N(6)-biotinyl-L-lysyl-[protein] + malonyl-CoA. Its pathway is lipid metabolism; malonyl-CoA biosynthesis; malonyl-CoA from acetyl-CoA: step 1/1. In terms of biological role, component of the acetyl coenzyme A carboxylase (ACC) complex. First, biotin carboxylase catalyzes the carboxylation of biotin on its carrier protein (BCCP) and then the CO(2) group is transferred by the carboxyltransferase to acetyl-CoA to form malonyl-CoA. This is Acetyl-coenzyme A carboxylase carboxyl transferase subunit alpha from Ralstonia pickettii (strain 12J).